The sequence spans 796 residues: Quinoprotein glucose dehydrogenase (796 aa).

Residues 1–10 are Cytoplasmic-facing; it reads MAINNTGSRR. The chain crosses the membrane as a helical span at residues 11-37; that stretch reads LLVTLTALFAALCGLYLLIGGGWLVAI. Over 38–40 the chain is Periplasmic; that stretch reads GGS. The chain crosses the membrane as a helical span at residues 41 to 58; that stretch reads WYYPIAGLVMLGVAWMLW. Residues 59–62 lie on the Cytoplasmic side of the membrane; sequence RSKR. The chain crosses the membrane as a helical span at residues 63-81; it reads AALWLYAALLLGTMIWGVW. Residues 82–95 lie on the Periplasmic side of the membrane; the sequence is EVGFDFWALTPRSD. A helical membrane pass occupies residues 96-110; that stretch reads ILVFFGIWLILPFVW. Residues 111 to 118 are Cytoplasmic-facing; that stretch reads RRLVIPAS. The helical transmembrane segment at 119 to 141 threads the bilayer; the sequence is GAVAALVVALLISGGILTWAGFN. Residues 142 to 796 are Periplasmic-facing; that stretch reads DPQEINGTLS…VAYALPDDVK (655 aa). Catalysis depends on aspartate 466, which acts as the Proton acceptor.

The protein belongs to the bacterial PQQ dehydrogenase family. As to quaternary structure, monomer. Requires pyrroloquinoline quinone as cofactor.

Its subcellular location is the cell inner membrane. The catalysed reaction is a ubiquinone + D-glucose = D-glucono-1,5-lactone + a ubiquinol. Functionally, GDH is probably involved in energy conservation rather than in sugar metabolism. This is Quinoprotein glucose dehydrogenase (gcd) from Escherichia coli (strain K12).